A 209-amino-acid polypeptide reads, in one-letter code: Glycolipid transfer protein A (209 aa).

2 tandem repeats follow at residues 45–55 (IKADITGNITK) and 56–66 (IRSVYESNPTK). The tract at residues 45-66 (IKADITGNITKIRSVYESNPTK) is 2 X 12 AA approximate tandem repeats. Residue 48–55 (DITGNITK) participates in beta-D-galactosyl-(1-&gt;4)-beta-D-glucosyl-(1&lt;-&gt;1)-N-[(9Z)-octadecenoyl]-sphing-4-enine binding. 2 residues coordinate beta-D-galactosyl-(1-&gt;4)-beta-D-glucosyl-(1&lt;-&gt;1)-N-[(9Z)-octadecenoyl]-sphing-4-enine: histidine 140 and tyrosine 207.

The protein belongs to the GLTP family.

Its subcellular location is the cytoplasm. Functionally, accelerates the intermembrane transfer of various glycolipids. Catalyzes the transfer of various glycosphingolipids between membranes but does not catalyze the transfer of phospholipids. May be involved in the intracellular translocation of glucosylceramides. The chain is Glycolipid transfer protein A (gltp-a) from Xenopus laevis (African clawed frog).